Here is a 112-residue protein sequence, read N- to C-terminus: Histone H3-4 (112 aa).

Residues 1–31 (QTGAKAPRKALANKAARKTAPADGGVKKPHR) are disordered.

It belongs to the histone H3 family. In terms of assembly, the nucleosome is a histone octamer containing two molecules each of H2A, H2B, H3 and H4 assembled in one H3-H4 heterotetramer and two H2A-H2B heterodimers. The octamer wraps approximately 147 bp of DNA.

It is found in the nucleus. Its subcellular location is the chromosome. Functionally, core component of nucleosome. Nucleosomes wrap and compact DNA into chromatin, limiting DNA accessibility to the cellular machineries which require DNA as a template. Histones thereby play a central role in transcription regulation, DNA repair, DNA replication and chromosomal stability. DNA accessibility is regulated via a complex set of post-translational modifications of histones, also called histone code, and nucleosome remodeling. The polypeptide is Histone H3-4 (H3-4) (Stylonychia lemnae (Ciliate)).